Consider the following 636-residue polypeptide: Chaperone protein DnaK (636 aa).

A Phosphothreonine; by autocatalysis modification is found at Thr-196. Residues 591–636 (LAEAMYKSSSQPGAQEAPPTDGQPKPDEKGKDNVVDAEFVDVDDKK) are disordered. The segment covering 614-624 (PKPDEKGKDNV) has biased composition (basic and acidic residues).

This sequence belongs to the heat shock protein 70 family.

In terms of biological role, acts as a chaperone. This chain is Chaperone protein DnaK, found in Solibacter usitatus (strain Ellin6076).